We begin with the raw amino-acid sequence, 37 residues long: MKVRASVKKMCDNCRVIKRKGKVMVICSNAKHKQRQG.

Belongs to the bacterial ribosomal protein bL36 family.

Its subcellular location is the plastid. It localises to the chloroplast. The polypeptide is Large ribosomal subunit protein bL36c (rpl36) (Chlamydomonas reinhardtii (Chlamydomonas smithii)).